A 238-amino-acid chain; its full sequence is Ubiquinone biosynthesis O-methyltransferase (238 aa).

S-adenosyl-L-methionine is bound by residues R39, G59, D80, and M124.

It belongs to the methyltransferase superfamily. UbiG/COQ3 family.

The catalysed reaction is a 3-demethylubiquinol + S-adenosyl-L-methionine = a ubiquinol + S-adenosyl-L-homocysteine + H(+). It carries out the reaction a 3-(all-trans-polyprenyl)benzene-1,2-diol + S-adenosyl-L-methionine = a 2-methoxy-6-(all-trans-polyprenyl)phenol + S-adenosyl-L-homocysteine + H(+). It functions in the pathway cofactor biosynthesis; ubiquinone biosynthesis. Its function is as follows. O-methyltransferase that catalyzes the 2 O-methylation steps in the ubiquinone biosynthetic pathway. The chain is Ubiquinone biosynthesis O-methyltransferase from Aeromonas salmonicida (strain A449).